Consider the following 88-residue polypeptide: YcgL domain-containing protein CGSHiGG_01115 (88 aa).

In terms of domain architecture, YcgL spans 1-85 (MLCAIYKSKK…QDDGLFNSLS (85 aa)).

This Haemophilus influenzae (strain PittGG) protein is YcgL domain-containing protein CGSHiGG_01115.